The chain runs to 243 residues: Tryptophan synthase alpha chain (243 aa).

Residues Glu-31 and Asp-42 each act as proton acceptor in the active site.

The protein belongs to the TrpA family. Tetramer of two alpha and two beta chains.

The enzyme catalyses (1S,2R)-1-C-(indol-3-yl)glycerol 3-phosphate + L-serine = D-glyceraldehyde 3-phosphate + L-tryptophan + H2O. It functions in the pathway amino-acid biosynthesis; L-tryptophan biosynthesis; L-tryptophan from chorismate: step 5/5. Functionally, the alpha subunit is responsible for the aldol cleavage of indoleglycerol phosphate to indole and glyceraldehyde 3-phosphate. This chain is Tryptophan synthase alpha chain, found in Staphylococcus epidermidis (strain ATCC 35984 / DSM 28319 / BCRC 17069 / CCUG 31568 / BM 3577 / RP62A).